Reading from the N-terminus, the 199-residue chain is Mediator of RNA polymerase II transcription subunit 10 (199 aa).

Belongs to the Mediator complex subunit 10 family. Component of the Mediator complex.

The protein resides in the nucleus. In terms of biological role, component of the Mediator complex, a coactivator involved in the regulated transcription of nearly all RNA polymerase II-dependent genes. Mediator functions as a bridge to convey information from gene-specific regulatory proteins to the basal RNA polymerase II transcription machinery. Mediator is recruited to promoters by direct interactions with regulatory proteins and serves as a scaffold for the assembly of a functional preinitiation complex with RNA polymerase II and the general transcription factors. In Candida glabrata (strain ATCC 2001 / BCRC 20586 / JCM 3761 / NBRC 0622 / NRRL Y-65 / CBS 138) (Yeast), this protein is Mediator of RNA polymerase II transcription subunit 10 (NUT2).